The following is a 302-amino-acid chain: Homoserine kinase (302 aa).

90–100 (KPGSGLGSSSA) is a binding site for ATP.

This sequence belongs to the GHMP kinase family. Homoserine kinase subfamily.

The protein resides in the cytoplasm. The catalysed reaction is L-homoserine + ATP = O-phospho-L-homoserine + ADP + H(+). It participates in amino-acid biosynthesis; L-threonine biosynthesis; L-threonine from L-aspartate: step 4/5. Functionally, catalyzes the ATP-dependent phosphorylation of L-homoserine to L-homoserine phosphate. This Methanococcus vannielii (strain ATCC 35089 / DSM 1224 / JCM 13029 / OCM 148 / SB) protein is Homoserine kinase.